Reading from the N-terminus, the 269-residue chain is Nuclear egress protein 2 (269 aa).

Residues 1-247 (MSRRTYVRSE…VWKLALPVAN (247 aa)) lie on the Perinuclear space side of the membrane. Residues 248-268 (VTYALFIVIVLVVVLGAVLFW) traverse the membrane as a helical segment. Residue K269 is a topological domain, nuclear.

It belongs to the herpesviridae NEC2 protein family. In terms of assembly, forms a heterohexameric complex with NEC1. Phosphorylated.

Its subcellular location is the host nucleus inner membrane. Its function is as follows. Plays an essential role in virion nuclear egress, the first step of virion release from infected cell. Within the host nucleus, NEC1 interacts with the newly formed capsid through the vertexes and directs it to the inner nuclear membrane by associating with NEC2. Induces the budding of the capsid at the inner nuclear membrane as well as its envelopment into the perinuclear space. There, the NEC1/NEC2 complex promotes the fusion of the enveloped capsid with the outer nuclear membrane and the subsequent release of the viral capsid into the cytoplasm where it will reach the secondary budding sites in the host Golgi or trans-Golgi network. The sequence is that of Nuclear egress protein 2 from Homo sapiens (Human).